Consider the following 119-residue polypeptide: Large ribosomal subunit protein uL22 (119 aa).

It belongs to the universal ribosomal protein uL22 family. In terms of assembly, part of the 50S ribosomal subunit.

Its function is as follows. This protein binds specifically to 23S rRNA; its binding is stimulated by other ribosomal proteins, e.g. L4, L17, and L20. It is important during the early stages of 50S assembly. It makes multiple contacts with different domains of the 23S rRNA in the assembled 50S subunit and ribosome. In terms of biological role, the globular domain of the protein is located near the polypeptide exit tunnel on the outside of the subunit, while an extended beta-hairpin is found that lines the wall of the exit tunnel in the center of the 70S ribosome. The sequence is that of Large ribosomal subunit protein uL22 from Rickettsia bellii (strain OSU 85-389).